Reading from the N-terminus, the 307-residue chain is Vesicle-trafficking protein SEC22a (307 aa).

S2 carries the post-translational modification N-acetylserine. Residues 2-187 (SMILSASVIR…ISSAHQRLEP (186 aa)) lie on the Cytoplasmic side of the membrane. S6 and S8 each carry phosphoserine. The 112-residue stretch at 8–119 (SVIRVRDGLP…YCFIEFDNFI (112 aa)) folds into the Longin domain. A helical transmembrane segment spans residues 188–208 (ATLSGIVGFILSLLCGALNLI). Over 209–226 (RGFHAIESLLQSDGDDFN) the chain is Lumenal. Residues 227–247 (YIIAFFLGTAACLYQCYLLVY) traverse the membrane as a helical segment. Residues 248 to 253 (YTGWRN) lie on the Cytoplasmic side of the membrane. The helical transmembrane segment at 254 to 271 (VKSFLTFGLICLCNMYLY) threads the bilayer. The Lumenal segment spans residues 272–274 (ELR). A helical membrane pass occupies residues 275–295 (NLWQLFFHVTVGAFVTLQIWL). Residues 296–307 (RQAQGKAPDYDV) are Cytoplasmic-facing.

It belongs to the synaptobrevin family.

The protein resides in the endoplasmic reticulum membrane. In terms of biological role, may be involved in vesicle transport between the ER and the Golgi complex. The sequence is that of Vesicle-trafficking protein SEC22a (SEC22A) from Macaca fascicularis (Crab-eating macaque).